The sequence spans 1010 residues: Glycine--tRNA ligase (1010 aa).

A glycine--tRNA ligase alpha subunit region spans residues 1-312; that stretch reads MSEHPLTLQS…TSESVVPMIS (312 aa). The glycine--tRNA ligase beta subunit stretch occupies residues 313-1010; the sequence is STEDLLLEIG…SLCHWESVAV (698 aa).

The protein belongs to the class-II aminoacyl-tRNA synthetase family.

It localises to the cytoplasm. It catalyses the reaction tRNA(Gly) + glycine + ATP = glycyl-tRNA(Gly) + AMP + diphosphate. The sequence is that of Glycine--tRNA ligase (glyQS) from Chlamydia pneumoniae (Chlamydophila pneumoniae).